The sequence spans 199 residues: BREX protein BrxA (199 aa).

The protein belongs to the BrxA family.

Functionally, BREX systems (bacteriophage exclusion) provide immunity against bacteriophage. Part of a type 1 BREX system which protects against dsDNA phage. This system allows phage adsorption but prevents phage DNA replication, without degradation of the phage DNA. Methylation of bacterial DNA by PglX guides self/non-self discrimination. This chain is BREX protein BrxA, found in Paramagnetospirillum magneticum (strain ATCC 700264 / AMB-1) (Magnetospirillum magneticum).